Here is a 231-residue protein sequence, read N- to C-terminus: 2-C-methyl-D-erythritol 4-phosphate cytidylyltransferase (231 aa).

It belongs to the IspD/TarI cytidylyltransferase family. IspD subfamily.

It catalyses the reaction 2-C-methyl-D-erythritol 4-phosphate + CTP + H(+) = 4-CDP-2-C-methyl-D-erythritol + diphosphate. It participates in isoprenoid biosynthesis; isopentenyl diphosphate biosynthesis via DXP pathway; isopentenyl diphosphate from 1-deoxy-D-xylulose 5-phosphate: step 2/6. Its function is as follows. Catalyzes the formation of 4-diphosphocytidyl-2-C-methyl-D-erythritol from CTP and 2-C-methyl-D-erythritol 4-phosphate (MEP). The protein is 2-C-methyl-D-erythritol 4-phosphate cytidylyltransferase of Shewanella piezotolerans (strain WP3 / JCM 13877).